Consider the following 259-residue polypeptide: Hydroxyethylthiazole kinase (259 aa).

Met50 contributes to the substrate binding site. Positions 122 and 168 each coordinate ATP. Gly195 contacts substrate.

Belongs to the Thz kinase family. Mg(2+) is required as a cofactor.

The catalysed reaction is 5-(2-hydroxyethyl)-4-methylthiazole + ATP = 4-methyl-5-(2-phosphooxyethyl)-thiazole + ADP + H(+). It participates in cofactor biosynthesis; thiamine diphosphate biosynthesis; 4-methyl-5-(2-phosphoethyl)-thiazole from 5-(2-hydroxyethyl)-4-methylthiazole: step 1/1. Its function is as follows. Catalyzes the phosphorylation of the hydroxyl group of 4-methyl-5-beta-hydroxyethylthiazole (THZ). The protein is Hydroxyethylthiazole kinase of Escherichia coli O127:H6 (strain E2348/69 / EPEC).